The following is a 37-amino-acid chain: Large ribosomal subunit protein bL36 (37 aa).

It belongs to the bacterial ribosomal protein bL36 family.

In Leptospira biflexa serovar Patoc (strain Patoc 1 / Ames), this protein is Large ribosomal subunit protein bL36.